A 138-amino-acid polypeptide reads, in one-letter code: Translation initiation factor 2 subunit beta (138 aa).

Belongs to the eIF-2-beta/eIF-5 family. As to quaternary structure, heterotrimer composed of an alpha, a beta and a gamma chain.

In terms of biological role, eIF-2 functions in the early steps of protein synthesis by forming a ternary complex with GTP and initiator tRNA. This chain is Translation initiation factor 2 subunit beta, found in Methanopyrus kandleri (strain AV19 / DSM 6324 / JCM 9639 / NBRC 100938).